An 87-amino-acid polypeptide reads, in one-letter code: Small ribosomal subunit protein bS16 (87 aa).

The protein belongs to the bacterial ribosomal protein bS16 family.

In Fusobacterium nucleatum subsp. nucleatum (strain ATCC 25586 / DSM 15643 / BCRC 10681 / CIP 101130 / JCM 8532 / KCTC 2640 / LMG 13131 / VPI 4355), this protein is Small ribosomal subunit protein bS16.